A 480-amino-acid polypeptide reads, in one-letter code: Sensor histidine kinase CusS (480 aa).

Over 1–15 (MVSKPFQRPFSLATR) the chain is Cytoplasmic. A helical membrane pass occupies residues 16-36 (LTFFISLATIAAFFAFAWIMI). Topologically, residues 37–186 (HSVKVHFAEQ…LHYINDLMNK (150 aa)) are periplasmic. Residues 187 to 207 (LIMTASVISILIVFIVLLAVH) form a helical membrane-spanning segment. Residues 208–260 (KGHAPIRSVSRQIQNITSKDLDVRLDPQTVPIELEQLVLSFNHMIERIEDVFT) form the HAMP domain. At 208 to 480 (KGHAPIRSVS…GTRFVITLPA (273 aa)) the chain is on the cytoplasmic side. Residues 268–480 (DIAHEIRTPI…GTRFVITLPA (213 aa)) form the Histidine kinase domain. His271 is subject to Phosphohistidine; by autocatalysis.

In terms of processing, autophosphorylated.

It is found in the cell inner membrane. The catalysed reaction is ATP + protein L-histidine = ADP + protein N-phospho-L-histidine.. In terms of biological role, member of the two-component regulatory system CusS/CusR involved in response to copper and silver. Acts as a copper/silver ion sensor. Activates CusR by phosphorylation. The protein is Sensor histidine kinase CusS (cusS) of Escherichia coli (strain K12).